We begin with the raw amino-acid sequence, 259 residues long: Protein FAM220A (259 aa).

2 disordered regions span residues 1–44 (MRDR…ADAP) and 131–154 (LGGGPRATDGHRGQCPKGEPRVSR). Positions 138–152 (TDGHRGQCPKGEPRV) are enriched in basic and acidic residues.

Interacts with transcriptional activator STAT3; the interaction occurs in both the nucleus and the cytoplasm, is enhanced by IL6 and promotes STAT3 dephosphorylation, leading to negative regulation of STAT3 transcriptional activator activity. Can interact with both unphosphorylated and phosphorylated STAT3 but interacts preferentially with phosphorylated STAT3 in the nucleus. Interacts with protein phosphatase PTPN2/TC45; this promotes interaction of PTPN2 with STAT3, leading to dephosphorylation of STAT3 by PTPN2.

Its subcellular location is the nucleus. The protein resides in the cytoplasm. It is found in the cytoplasmic vesicle. The protein localises to the secretory vesicle. It localises to the acrosome. Promotes dephosphorylation of transcriptional activator STAT3 by interacting with both STAT3 and protein phosphatase PTPN2. This promotes interaction of PTPN2 with STAT3 and mediates STAT3 dephosphorylation by PTPN2, leading to negative regulation of STAT3 transcriptional activator activity. May be required for spermiogenesis or sperm function. This chain is Protein FAM220A, found in Homo sapiens (Human).